The primary structure comprises 425 residues: Raffinose permease (425 aa).

The Cytoplasmic portion of the chain corresponds to 1 to 11 (MNSASTHKNTD). Residues 12–32 (FWIFGLFFFLYFFIMATCFPF) traverse the membrane as a helical segment. At 33-48 (LPVWLSDVVGLSKTDT) the chain is on the periplasmic side. The chain crosses the membrane as a helical span at residues 49–69 (GIVFSCLSLFAISFQPLLGVI). The Cytoplasmic portion of the chain corresponds to 70–78 (SDRLGLKKN). A helical transmembrane segment spans residues 79–99 (LIWSISLLLVFFAPFFLYVFA). Over 100–105 (PLLHLN) the chain is Periplasmic. A helical transmembrane segment spans residues 106 to 126 (IWAGALTGGVFIGFVFSAGAG). Residues 127-147 (AIEAYIERVSRSSGFEYGKAR) lie on the Cytoplasmic side of the membrane. A helical transmembrane segment spans residues 148 to 168 (MFGCLGWALCATMAGILFNVD). A topological domain (periplasmic) is located at residue proline 169. Residues 170–190 (SLVFWMGSGGALLLLLLLYLA) form a helical membrane-spanning segment. Topologically, residues 191–229 (RPSTSQTAMVMNALGANSSLISTRMVFSLFRMRQMWMFV) are cytoplasmic. Residues 230–250 (LYTIGVACVYDVFDQQFAIFF) form a helical membrane-spanning segment. The Periplasmic segment spans residues 251 to 265 (RSFFDTPQAGIKAFG). The chain crosses the membrane as a helical span at residues 266–286 (FATTAGEICNAIIMFCTPWII). At 287 to 294 (NRIGAKNT) the chain is on the cytoplasmic side. Residues 295-315 (LLVAGGIMTIRITGSAFATTM) traverse the membrane as a helical segment. Residue threonine 316 is a topological domain, periplasmic. The helical transmembrane segment at 317 to 337 (EVVILKMLHALEVPFLLVGAF) threads the bilayer. Topologically, residues 338 to 351 (KYITGVFDTRLSAT) are cytoplasmic. The chain crosses the membrane as a helical span at residues 352-372 (VYLIGFQFSKQLAAILLSTFA). Residues 373 to 383 (GHLYDRMGFQN) lie on the Periplasmic side of the membrane. The chain crosses the membrane as a helical span at residues 384–404 (TYFVLGMIVLTVTVISAFTLS). The Cytoplasmic portion of the chain corresponds to 405–425 (SSPGIVHPSVEKAPVAHSEIN).

It belongs to the major facilitator superfamily. Oligosaccharide:H(+) symporter (OHS) (TC 2.A.1.5) family. Monomer.

The protein resides in the cell inner membrane. In terms of biological role, responsible for transport of raffinose into the cell. Can also transport lactose and melibiose. Has weak activity with maltose. This is Raffinose permease from Escherichia coli.